The following is a 198-amino-acid chain: Leucyl/phenylalanyl-tRNA--protein transferase (198 aa).

This sequence belongs to the L/F-transferase family.

It is found in the cytoplasm. It catalyses the reaction N-terminal L-lysyl-[protein] + L-leucyl-tRNA(Leu) = N-terminal L-leucyl-L-lysyl-[protein] + tRNA(Leu) + H(+). The catalysed reaction is N-terminal L-arginyl-[protein] + L-leucyl-tRNA(Leu) = N-terminal L-leucyl-L-arginyl-[protein] + tRNA(Leu) + H(+). It carries out the reaction L-phenylalanyl-tRNA(Phe) + an N-terminal L-alpha-aminoacyl-[protein] = an N-terminal L-phenylalanyl-L-alpha-aminoacyl-[protein] + tRNA(Phe). Functions in the N-end rule pathway of protein degradation where it conjugates Leu, Phe and, less efficiently, Met from aminoacyl-tRNAs to the N-termini of proteins containing an N-terminal arginine or lysine. The protein is Leucyl/phenylalanyl-tRNA--protein transferase of Synechocystis sp. (strain ATCC 27184 / PCC 6803 / Kazusa).